Consider the following 212-residue polypeptide: Large ribosomal subunit protein uL1 (212 aa).

Belongs to the universal ribosomal protein uL1 family. As to quaternary structure, part of the 50S ribosomal subunit.

Binds directly to 23S rRNA. Probably involved in E site tRNA release. In terms of biological role, protein L1 is also a translational repressor protein, it controls the translation of its operon by binding to its mRNA. This Methanothermobacter thermautotrophicus (strain ATCC 29096 / DSM 1053 / JCM 10044 / NBRC 100330 / Delta H) (Methanobacterium thermoautotrophicum) protein is Large ribosomal subunit protein uL1.